The primary structure comprises 550 residues: Formin-binding protein 1-like (550 aa).

Positions 1-263 (MSWGTELWDQ…AAKSVDERRD (263 aa)) constitute an F-BAR domain. 2 coiled-coil regions span residues 66–258 (FTSC…AKSV) and 334–426 (LEDF…QRSE). The 78-residue stretch at 339 to 416 (HLPPEQRRKR…IHKNEAWLSE (78 aa)) folds into the REM-1 domain. Over residues 423-432 (QRSERRHSAE) the composition is skewed to basic and acidic residues. Positions 423-467 (QRSERRHSAEANHLVAQGRESPEGSYTEDANQEGRVQPQPHAHPE) are disordered. The SH3 domain maps to 479-540 (PAIGHCKSLY…PTSYIDITLE (62 aa)).

Belongs to the FNBP1 family. In terms of assembly, homodimerizes, the dimers can polymerize end-to-end to form filamentous structures. Interacts with GTP-bound cdc42 and wasl/n-wasp.

It localises to the cytoplasm. Its subcellular location is the cytoskeleton. The protein localises to the cell cortex. It is found in the cytoplasmic vesicle. The protein resides in the cell membrane. In terms of biological role, required to coordinate membrane tubulation with reorganization of the actin cytoskeleton during endocytosis. Promotes cdc42-induced actin polymerization by activating the wasl-waspip complex, the predominant form of wasl/n-wasp in cells. Essential for autophagy of intracellular bacterial pathogens. This is Formin-binding protein 1-like (fnbp1l) from Xenopus tropicalis (Western clawed frog).